A 108-amino-acid chain; its full sequence is Large ribosomal subunit protein uL22 (108 aa).

Belongs to the universal ribosomal protein uL22 family. In terms of assembly, part of the 50S ribosomal subunit.

Its function is as follows. This protein binds specifically to 23S rRNA; its binding is stimulated by other ribosomal proteins, e.g. L4, L17, and L20. It is important during the early stages of 50S assembly. It makes multiple contacts with different domains of the 23S rRNA in the assembled 50S subunit and ribosome. Functionally, the globular domain of the protein is located near the polypeptide exit tunnel on the outside of the subunit, while an extended beta-hairpin is found that lines the wall of the exit tunnel in the center of the 70S ribosome. In Desulfatibacillum aliphaticivorans, this protein is Large ribosomal subunit protein uL22.